A 252-amino-acid polypeptide reads, in one-letter code: Imidazole glycerol phosphate synthase subunit HisF (252 aa).

Catalysis depends on residues D11 and D130.

This sequence belongs to the HisA/HisF family. As to quaternary structure, heterodimer of HisH and HisF.

Its subcellular location is the cytoplasm. The catalysed reaction is 5-[(5-phospho-1-deoxy-D-ribulos-1-ylimino)methylamino]-1-(5-phospho-beta-D-ribosyl)imidazole-4-carboxamide + L-glutamine = D-erythro-1-(imidazol-4-yl)glycerol 3-phosphate + 5-amino-1-(5-phospho-beta-D-ribosyl)imidazole-4-carboxamide + L-glutamate + H(+). The protein operates within amino-acid biosynthesis; L-histidine biosynthesis; L-histidine from 5-phospho-alpha-D-ribose 1-diphosphate: step 5/9. IGPS catalyzes the conversion of PRFAR and glutamine to IGP, AICAR and glutamate. The HisF subunit catalyzes the cyclization activity that produces IGP and AICAR from PRFAR using the ammonia provided by the HisH subunit. The sequence is that of Imidazole glycerol phosphate synthase subunit HisF from Bacillus anthracis (strain CDC 684 / NRRL 3495).